The chain runs to 490 residues: Betaine aldehyde dehydrogenase (490 aa).

K(+) is bound at residue Asn-93. Position 150-152 (150-152 (GAW)) interacts with NAD(+). Lys-162 functions as the Charge relay system in the catalytic mechanism. An NAD(+)-binding site is contributed by 176 to 179 (KPSE). Val-180 is a binding site for K(+). Residue 230 to 233 (GTAT) coordinates NAD(+). A K(+)-binding site is contributed by Leu-246. The active-site Proton acceptor is Glu-252. NAD(+)-binding residues include Gly-254, Cys-286, and Glu-387. Cys-286 functions as the Nucleophile in the catalytic mechanism. Cysteine sulfenic acid (-SOH) is present on Cys-286. K(+) is bound by residues Lys-457 and Gly-460. Glu-464 serves as the catalytic Charge relay system.

It belongs to the aldehyde dehydrogenase family. In terms of assembly, dimer of dimers. The cofactor is K(+).

The catalysed reaction is betaine aldehyde + NAD(+) + H2O = glycine betaine + NADH + 2 H(+). It functions in the pathway amine and polyamine biosynthesis; betaine biosynthesis via choline pathway; betaine from betaine aldehyde: step 1/1. In terms of biological role, involved in the biosynthesis of the osmoprotectant glycine betaine. Catalyzes the irreversible oxidation of betaine aldehyde to the corresponding acid. The chain is Betaine aldehyde dehydrogenase from Xanthomonas euvesicatoria pv. vesicatoria (strain 85-10) (Xanthomonas campestris pv. vesicatoria).